The chain runs to 140 residues: Putative pre-16S rRNA nuclease (140 aa).

Belongs to the YqgF nuclease family.

The protein localises to the cytoplasm. Its function is as follows. Could be a nuclease involved in processing of the 5'-end of pre-16S rRNA. In Yersinia pseudotuberculosis serotype IB (strain PB1/+), this protein is Putative pre-16S rRNA nuclease.